The primary structure comprises 397 residues: Lysophospholipid transporter LplT (397 aa).

Residues 1-17 (MSESVHTNTSLWSKGMK) lie on the Periplasmic side of the membrane. Residues 18–38 (AVIVAQFLSAFGDNALLFATL) form a helical membrane-spanning segment. Residues 39–52 (ALLKAQFYPEWSQP) are Cytoplasmic-facing. Residues 53–73 (ILQMVFVGAYILFAPFVGQVA) form a helical membrane-spanning segment. Residues 74–90 (DSFAKGRVMMFANGLKL) are Periplasmic-facing. A helical membrane pass occupies residues 91-111 (LGAASICFGINPFLGYTLVGV). Topologically, residues 112–144 (GAAAYSPAKYGILGELTTGSKLVKANGLMEAST) are cytoplasmic. The chain crosses the membrane as a helical span at residues 145 to 165 (IAAILLGSVAGGVLADWHVLV). Residue A166 is a topological domain, periplasmic. The chain crosses the membrane as a helical span at residues 167–187 (LAACALAYGGAVVANIYIPKL). Over 188–226 (AAARPGQSWNLINMTRSFLNACTSLWRNGETRFSLVGTS) the chain is Cytoplasmic. The chain crosses the membrane as a helical span at residues 227 to 247 (LFWGAGVTLRFLLVLWVPVAL). Over 248–256 (GITDNATPT) the chain is Periplasmic. A helical membrane pass occupies residues 257 to 277 (YLNAMVAIGIVVGAGAAAKLV). Residues 278 to 280 (TLE) lie on the Cytoplasmic side of the membrane. Residues 281–301 (TVSRCMPAGILIGVVVLIFSL) form a helical membrane-spanning segment. Topologically, residues 302–304 (QHE) are periplasmic. The chain crosses the membrane as a helical span at residues 305–325 (QLPAYALLMLIGVLGGFFVVP). The Cytoplasmic portion of the chain corresponds to 326–343 (LNALLQERGKKSVGAGNA). A helical membrane pass occupies residues 344–364 (IAVQNLGENSAMLLMLGIYSL). At 365–366 (AV) the chain is on the periplasmic side. Residues 367 to 387 (MVGIPVVPIGIGFGALFALAI) traverse the membrane as a helical segment. The Cytoplasmic portion of the chain corresponds to 388-397 (TALWIWQRRH).

Belongs to the major facilitator superfamily. LplT (TC 2.A.1.42) family.

It is found in the cell inner membrane. Functionally, catalyzes the facilitated diffusion of 2-acyl-glycero-3-phosphoethanolamine (2-acyl-GPE) into the cell. This Escherichia coli O157:H7 (strain EC4115 / EHEC) protein is Lysophospholipid transporter LplT.